The primary structure comprises 421 residues: 3-isopropylmalate dehydratase large subunit (421 aa).

Residues Cys301, Cys361, and Cys364 each coordinate [4Fe-4S] cluster.

It belongs to the aconitase/IPM isomerase family. LeuC type 2 subfamily. Heterodimer of LeuC and LeuD. [4Fe-4S] cluster serves as cofactor.

The enzyme catalyses (2R,3S)-3-isopropylmalate = (2S)-2-isopropylmalate. It participates in amino-acid biosynthesis; L-leucine biosynthesis; L-leucine from 3-methyl-2-oxobutanoate: step 2/4. Functionally, catalyzes the isomerization between 2-isopropylmalate and 3-isopropylmalate, via the formation of 2-isopropylmaleate. The polypeptide is 3-isopropylmalate dehydratase large subunit (Desulfitobacterium hafniense (strain Y51)).